The primary structure comprises 108 residues: Thioredoxin (108 aa).

A Thioredoxin domain is found at 2-108; that stretch reads NKIIELTDQN…LKEFLDENIN (107 aa). A disulfide bridge links C32 with C35.

It belongs to the thioredoxin family.

Participates in various redox reactions through the reversible oxidation of its active center dithiol to a disulfide and catalyzes dithiol-disulfide exchange reactions. The polypeptide is Thioredoxin (trxA) (Buchnera aphidicola subsp. Acyrthosiphon pisum (strain APS) (Acyrthosiphon pisum symbiotic bacterium)).